A 246-amino-acid chain; its full sequence is UDP-N-acetyl-D-mannosaminuronic acid transferase (246 aa).

It belongs to the glycosyltransferase 26 family.

It carries out the reaction UDP-N-acetyl-alpha-D-mannosaminouronate + N-acetyl-alpha-D-glucosaminyl-di-trans,octa-cis-undecaprenyl diphosphate = beta-D-ManNAcA-(1-&gt;4)-alpha-D-GlcNAc-di-trans,octa-cis-undecaprenyl diphosphate + UDP + H(+). It functions in the pathway bacterial outer membrane biogenesis; enterobacterial common antigen biosynthesis. In terms of biological role, catalyzes the synthesis of Und-PP-GlcNAc-ManNAcA (Lipid II), the second lipid-linked intermediate involved in enterobacterial common antigen (ECA) synthesis. The protein is UDP-N-acetyl-D-mannosaminuronic acid transferase of Salmonella schwarzengrund (strain CVM19633).